The primary structure comprises 426 residues: Glutamate-1-semialdehyde 2,1-aminomutase (426 aa).

Lys-265 is subject to N6-(pyridoxal phosphate)lysine.

Belongs to the class-III pyridoxal-phosphate-dependent aminotransferase family. HemL subfamily. As to quaternary structure, homodimer. Requires pyridoxal 5'-phosphate as cofactor.

Its subcellular location is the cytoplasm. It catalyses the reaction (S)-4-amino-5-oxopentanoate = 5-aminolevulinate. It functions in the pathway porphyrin-containing compound metabolism; protoporphyrin-IX biosynthesis; 5-aminolevulinate from L-glutamyl-tRNA(Glu): step 2/2. In Klebsiella pneumoniae subsp. pneumoniae (strain ATCC 700721 / MGH 78578), this protein is Glutamate-1-semialdehyde 2,1-aminomutase.